Consider the following 278-residue polypeptide: Undecaprenyl-diphosphatase 3 (278 aa).

6 helical membrane-spanning segments follow: residues 42–62, 88–108, 119–139, 187–207, 224–244, and 254–274; these read DITAFTAIIQVGAVFATLLYF, YRFGWAVILGSIPIGLVGVAF, LWFVGGALILWSGVMGYADHV, VAVTRLSFFLSIPALMAAAAL, ATIIATVVSFAVAYVAIAWLL, and VFIGYRLALGATVLFLVATGI.

Belongs to the UppP family.

The protein localises to the cell membrane. The catalysed reaction is di-trans,octa-cis-undecaprenyl diphosphate + H2O = di-trans,octa-cis-undecaprenyl phosphate + phosphate + H(+). Functionally, catalyzes the dephosphorylation of undecaprenyl diphosphate (UPP). Confers resistance to bacitracin. The polypeptide is Undecaprenyl-diphosphatase 3 (Frankia casuarinae (strain DSM 45818 / CECT 9043 / HFP020203 / CcI3)).